Consider the following 361-residue polypeptide: Chorismate synthase (361 aa).

An NADP(+)-binding site is contributed by arginine 48. Residues 125-127 (RSS), 238-239 (NA), glycine 278, 293-297 (KPTSS), and arginine 319 each bind FMN.

The protein belongs to the chorismate synthase family. In terms of assembly, homotetramer. FMNH2 serves as cofactor.

It catalyses the reaction 5-O-(1-carboxyvinyl)-3-phosphoshikimate = chorismate + phosphate. The protein operates within metabolic intermediate biosynthesis; chorismate biosynthesis; chorismate from D-erythrose 4-phosphate and phosphoenolpyruvate: step 7/7. Catalyzes the anti-1,4-elimination of the C-3 phosphate and the C-6 proR hydrogen from 5-enolpyruvylshikimate-3-phosphate (EPSP) to yield chorismate, which is the branch point compound that serves as the starting substrate for the three terminal pathways of aromatic amino acid biosynthesis. This reaction introduces a second double bond into the aromatic ring system. This chain is Chorismate synthase, found in Vibrio anguillarum (strain ATCC 68554 / 775) (Listonella anguillarum).